Here is a 118-residue protein sequence, read N- to C-terminus: Transcription factor PAR1 (118 aa).

Residues 1–58 (MEETLATPDATRRSLSPSCSATVKSRAAGFERRTKRRLSETNASVREDREEAEEEEDE) are disordered. A compositionally biased stretch (polar residues) spans 13–23 (RSLSPSCSATV). The bHLH domain occupies 43–92 (ASVREDREEAEEEEDEVKEKIEALQRIIPGGAALGVDALFEETAGYILSL).

This sequence belongs to the bHLH protein family. In terms of assembly, homodimer.

Its subcellular location is the nucleus. Atypical bHLH transcription factor that acts as a negative regulator of a variety of shade avoidance syndrome (SAS) responses, including seedling elongation and photosynthetic pigment accumulation. Acts as a direct transcriptional repressor of two auxin-responsive genes, SAUR15 and SAUR68. May function in integrating shade and hormone transcriptional networks in response to light and auxin changes. This Arabidopsis thaliana (Mouse-ear cress) protein is Transcription factor PAR1 (PAR1).